A 525-amino-acid polypeptide reads, in one-letter code: Lysine--tRNA ligase (525 aa).

Positions Pro44–Thr52 match the 'HIGH' region motif. The short motif at Lys290–Ser294 is the 'KMSKS' region element. Residue Lys293 coordinates ATP.

The protein belongs to the class-I aminoacyl-tRNA synthetase family.

It is found in the cytoplasm. It catalyses the reaction tRNA(Lys) + L-lysine + ATP = L-lysyl-tRNA(Lys) + AMP + diphosphate. In Rickettsia felis (strain ATCC VR-1525 / URRWXCal2) (Rickettsia azadi), this protein is Lysine--tRNA ligase.